Reading from the N-terminus, the 363-residue chain is tRNA dimethylallyltransferase (363 aa).

The tract at residues 1–55 (MLACNDDTSLYLLVKQVTKKEIYSNDLENGNVKRGASMQSLYLIGDPKCCRNNSS) is unknown insert. 65–72 (GPTASGKS) contacts ATP. 67-72 (TASGKS) lines the substrate pocket. 2 interaction with substrate tRNA regions span residues 90–93 (DSMQ) and 214–218 (QRLIR).

It belongs to the IPP transferase family. As to quaternary structure, monomer. Mg(2+) serves as cofactor.

The enzyme catalyses adenosine(37) in tRNA + dimethylallyl diphosphate = N(6)-dimethylallyladenosine(37) in tRNA + diphosphate. Its function is as follows. Catalyzes the transfer of a dimethylallyl group onto the adenine at position 37 in tRNAs that read codons beginning with uridine, leading to the formation of N6-(dimethylallyl)adenosine (i(6)A). The polypeptide is tRNA dimethylallyltransferase (Rickettsia conorii (strain ATCC VR-613 / Malish 7)).